The following is a 243-amino-acid chain: Ribosomal RNA small subunit methyltransferase J (243 aa).

S-adenosyl-L-methionine-binding positions include 112–113 (ER) and D164.

Belongs to the methyltransferase superfamily. RsmJ family.

Its subcellular location is the cytoplasm. The enzyme catalyses guanosine(1516) in 16S rRNA + S-adenosyl-L-methionine = N(2)-methylguanosine(1516) in 16S rRNA + S-adenosyl-L-homocysteine + H(+). Specifically methylates the guanosine in position 1516 of 16S rRNA. This is Ribosomal RNA small subunit methyltransferase J from Legionella pneumophila (strain Corby).